Here is a 391-residue protein sequence, read N- to C-terminus: Phosphopentomutase (391 aa).

Mn(2+)-binding residues include Asp-12, Asp-285, His-290, Asp-326, His-327, and His-338.

The protein belongs to the phosphopentomutase family. It depends on Mn(2+) as a cofactor.

The protein localises to the cytoplasm. It carries out the reaction 2-deoxy-alpha-D-ribose 1-phosphate = 2-deoxy-D-ribose 5-phosphate. The catalysed reaction is alpha-D-ribose 1-phosphate = D-ribose 5-phosphate. The protein operates within carbohydrate degradation; 2-deoxy-D-ribose 1-phosphate degradation; D-glyceraldehyde 3-phosphate and acetaldehyde from 2-deoxy-alpha-D-ribose 1-phosphate: step 1/2. Functionally, isomerase that catalyzes the conversion of deoxy-ribose 1-phosphate (dRib-1-P) and ribose 1-phosphate (Rib-1-P) to deoxy-ribose 5-phosphate (dRib-5-P) and ribose 5-phosphate (Rib-5-P), respectively. The polypeptide is Phosphopentomutase (Herpetosiphon aurantiacus (strain ATCC 23779 / DSM 785 / 114-95)).